The chain runs to 383 residues: Anhydro-N-acetylmuramic acid kinase (383 aa).

9–16 (GTSLDGID) lines the ATP pocket.

It belongs to the anhydro-N-acetylmuramic acid kinase family.

It carries out the reaction 1,6-anhydro-N-acetyl-beta-muramate + ATP + H2O = N-acetyl-D-muramate 6-phosphate + ADP + H(+). The protein operates within amino-sugar metabolism; 1,6-anhydro-N-acetylmuramate degradation. It functions in the pathway cell wall biogenesis; peptidoglycan recycling. Catalyzes the specific phosphorylation of 1,6-anhydro-N-acetylmuramic acid (anhMurNAc) with the simultaneous cleavage of the 1,6-anhydro ring, generating MurNAc-6-P. Is required for the utilization of anhMurNAc either imported from the medium or derived from its own cell wall murein, and thus plays a role in cell wall recycling. The protein is Anhydro-N-acetylmuramic acid kinase of Bacillus cereus (strain ATCC 10987 / NRS 248).